The chain runs to 229 residues: Dihydrofolate reductase (229 aa).

Positions 11–227 constitute a DHFR domain; it reads SITAVVAATA…VKYIFEMWVL (217 aa). NADP(+) contacts are provided by residues A17 and 23–29; that span reads GIGLNGG. 37-42 provides a ligand contact to substrate; the sequence is EMKYFA. An NADP(+)-binding site is contributed by 64 to 66; sequence RKT. Position 80 (R80) interacts with substrate. Residues 86-88 and 127-134 contribute to the NADP(+) site; these read SGK and GGATLYTS.

Belongs to the dihydrofolate reductase family. Monomer.

It carries out the reaction (6S)-5,6,7,8-tetrahydrofolate + NADP(+) = 7,8-dihydrofolate + NADPH + H(+). It participates in cofactor biosynthesis; tetrahydrofolate biosynthesis; 5,6,7,8-tetrahydrofolate from 7,8-dihydrofolate: step 1/1. Key enzyme in folate metabolism. Catalyzes an essential reaction for de novo glycine and purine synthesis, and for DNA precursor synthesis. The protein is Dihydrofolate reductase (DFR1) of Cryptococcus neoformans var. neoformans serotype D (strain JEC21 / ATCC MYA-565) (Filobasidiella neoformans).